Consider the following 389-residue polypeptide: Succinate--CoA ligase [ADP-forming] subunit beta (389 aa).

In terms of domain architecture, ATP-grasp spans 9-244 (KQILRKYGIP…PSQMSNNEAR (236 aa)). Residues Lys-46, 53–55 (GRG), Ile-102, and Glu-107 each bind ATP. Positions 199 and 213 each coordinate Mg(2+). Residues Asn-264 and 321–323 (GIM) contribute to the substrate site.

It belongs to the succinate/malate CoA ligase beta subunit family. In terms of assembly, heterotetramer of two alpha and two beta subunits. The cofactor is Mg(2+).

It catalyses the reaction succinate + ATP + CoA = succinyl-CoA + ADP + phosphate. The catalysed reaction is GTP + succinate + CoA = succinyl-CoA + GDP + phosphate. It functions in the pathway carbohydrate metabolism; tricarboxylic acid cycle; succinate from succinyl-CoA (ligase route): step 1/1. Succinyl-CoA synthetase functions in the citric acid cycle (TCA), coupling the hydrolysis of succinyl-CoA to the synthesis of either ATP or GTP and thus represents the only step of substrate-level phosphorylation in the TCA. The beta subunit provides nucleotide specificity of the enzyme and binds the substrate succinate, while the binding sites for coenzyme A and phosphate are found in the alpha subunit. The chain is Succinate--CoA ligase [ADP-forming] subunit beta from Protochlamydia amoebophila (strain UWE25).